Consider the following 193-residue polypeptide: Acyl carrier protein phosphodiesterase (193 aa).

The protein belongs to the AcpH family.

It catalyses the reaction holo-[ACP] + H2O = apo-[ACP] + (R)-4'-phosphopantetheine + H(+). Functionally, converts holo-ACP to apo-ACP by hydrolytic cleavage of the phosphopantetheine prosthetic group from ACP. The sequence is that of Acyl carrier protein phosphodiesterase from Escherichia coli O7:K1 (strain IAI39 / ExPEC).